The following is a 341-amino-acid chain: Tetraacyldisaccharide 4'-kinase (341 aa).

ATP is bound at residue 54–61; it reads TVGGTGKT.

Belongs to the LpxK family.

The catalysed reaction is a lipid A disaccharide + ATP = a lipid IVA + ADP + H(+). It participates in glycolipid biosynthesis; lipid IV(A) biosynthesis; lipid IV(A) from (3R)-3-hydroxytetradecanoyl-[acyl-carrier-protein] and UDP-N-acetyl-alpha-D-glucosamine: step 6/6. Functionally, transfers the gamma-phosphate of ATP to the 4'-position of a tetraacyldisaccharide 1-phosphate intermediate (termed DS-1-P) to form tetraacyldisaccharide 1,4'-bis-phosphate (lipid IVA). The protein is Tetraacyldisaccharide 4'-kinase of Mesorhizobium japonicum (strain LMG 29417 / CECT 9101 / MAFF 303099) (Mesorhizobium loti (strain MAFF 303099)).